Reading from the N-terminus, the 342-residue chain is UDP-N-acetylglucosamine--N-acetylmuramyl-(pentapeptide) pyrophosphoryl-undecaprenol N-acetylglucosamine transferase (342 aa).

UDP-N-acetyl-alpha-D-glucosamine contacts are provided by residues threonine 10–glycine 12, asparagine 124, serine 177, and glutamine 275.

This sequence belongs to the glycosyltransferase 28 family. MurG subfamily.

It localises to the cell inner membrane. The catalysed reaction is di-trans,octa-cis-undecaprenyl diphospho-N-acetyl-alpha-D-muramoyl-L-alanyl-D-glutamyl-meso-2,6-diaminopimeloyl-D-alanyl-D-alanine + UDP-N-acetyl-alpha-D-glucosamine = di-trans,octa-cis-undecaprenyl diphospho-[N-acetyl-alpha-D-glucosaminyl-(1-&gt;4)]-N-acetyl-alpha-D-muramoyl-L-alanyl-D-glutamyl-meso-2,6-diaminopimeloyl-D-alanyl-D-alanine + UDP + H(+). It participates in cell wall biogenesis; peptidoglycan biosynthesis. Its function is as follows. Cell wall formation. Catalyzes the transfer of a GlcNAc subunit on undecaprenyl-pyrophosphoryl-MurNAc-pentapeptide (lipid intermediate I) to form undecaprenyl-pyrophosphoryl-MurNAc-(pentapeptide)GlcNAc (lipid intermediate II). In Campylobacter jejuni subsp. jejuni serotype O:6 (strain 81116 / NCTC 11828), this protein is UDP-N-acetylglucosamine--N-acetylmuramyl-(pentapeptide) pyrophosphoryl-undecaprenol N-acetylglucosamine transferase.